Here is a 272-residue protein sequence, read N- to C-terminus: Phosphoglycolate phosphatase (272 aa).

The Nucleophile role is filled by D19. Mg(2+) contacts are provided by D19, D21, and D182.

It belongs to the HAD-like hydrolase superfamily. CbbY/CbbZ/Gph/YieH family. The cofactor is Mg(2+).

The catalysed reaction is 2-phosphoglycolate + H2O = glycolate + phosphate. The protein operates within organic acid metabolism; glycolate biosynthesis; glycolate from 2-phosphoglycolate: step 1/1. Functionally, specifically catalyzes the dephosphorylation of 2-phosphoglycolate. Is involved in the dissimilation of the intracellular 2-phosphoglycolate formed during the DNA repair of 3'-phosphoglycolate ends, a major class of DNA lesions induced by oxidative stress. The polypeptide is Phosphoglycolate phosphatase (Pseudomonas fluorescens (strain ATCC BAA-477 / NRRL B-23932 / Pf-5)).